The primary structure comprises 170 residues: Protein SprT (170 aa).

A SprT-like domain is found at 23-164 (QLARQHFSVE…CRQCGDKLKF (142 aa)). Position 78 (H78) interacts with Zn(2+). Residue E79 is part of the active site. H82 contacts Zn(2+).

It belongs to the SprT family. The cofactor is Zn(2+).

The protein resides in the cytoplasm. The protein is Protein SprT of Serratia proteamaculans (strain 568).